The primary structure comprises 277 residues: Hematopoietically-expressed homeobox protein HHEX (277 aa).

Disordered regions lie at residues 47-69 (AAPA…NSSF) and 199-277 (WRRL…SATR). A compositionally biased stretch (pro residues) spans 52–63 (HSLPAPPPPTLP). A DNA-binding region (homeobox) is located at residues 144 to 203 (RKGGQVRFSNEQTIELEKKFETQKYLSPPERKRLAKLLQLSERQVKTWFQNRRAKWRRLK). Over residues 210 to 226 (TKKEEAEGTGDHGDPRS) the composition is skewed to basic and acidic residues. Residues 250-266 (EDPESDVSDDSDQEVDI) show a composition bias toward acidic residues.

In all hematopoietic tissues except peripheral blood erythrocytes and in the liver and lung.

It is found in the nucleus. Functionally, recognizes the DNA sequence 5'-ATTAA-3'. Transcriptional repressor. May play a role in hematopoietic differentiation. This is Hematopoietically-expressed homeobox protein HHEX (HHEX) from Gallus gallus (Chicken).